The sequence spans 304 residues: Putative integrase/recombinase HI_1414 (304 aa).

The Core-binding (CB) domain occupies 30 to 109 (TLFSDVIKRY…TIGHIFKIAL (80 aa)). One can recognise a Tyr recombinase domain in the interval 131–304 (PRTQRVTEEN…DMAEVAELLD (174 aa)). Catalysis depends on residues Arg174, Lys199, His256, Arg259, and His281. Tyr291 acts as the O-(3'-phospho-DNA)-tyrosine intermediate in catalysis.

It belongs to the 'phage' integrase family.

In Haemophilus influenzae (strain ATCC 51907 / DSM 11121 / KW20 / Rd), this protein is Putative integrase/recombinase HI_1414.